We begin with the raw amino-acid sequence, 389 residues long: Curcumin synthase 1 (389 aa).

C164 is a catalytic residue.

This sequence belongs to the thiolase-like superfamily. Chalcone/stilbene synthases family. In terms of assembly, homodimer. As to expression, expressed in both the leaf and rhizome, with higher expression in the rhizome.

The enzyme catalyses (E)-feruloylacetyl-CoA + (E)-feruloyl-CoA + H2O = curcumin + CO2 + 2 CoA. It participates in secondary metabolite biosynthesis; flavonoid biosynthesis. Its function is as follows. Catalyzes the synthesis of curcumin by condensing feruloyl-CoA with a diketide-CoA in the curcuminoid biosynthesis. This is Curcumin synthase 1 (CURS1) from Curcuma longa (Turmeric).